The chain runs to 69 residues: Cap-specific mRNA (nucleoside-2'-O-)-methyltransferase (69 aa).

An mRNA-binding site is contributed by Y22. Residues Q39, Y66, and G68 each contribute to the S-adenosyl-L-methionine site.

It belongs to the class I-like SAM-binding methyltransferase superfamily. Poxvirus/kinetoplastid 2'-O-MTase family. Interacts with poly(A) polymerase catalytic subunit OPG063. Interacts with OPG109 and OPG123; these interactions might help linking transcription to capping and polyadenylation.

The protein localises to the virion. The enzyme catalyses a 5'-end (N(7)-methyl 5'-triphosphoguanosine)-ribonucleoside in mRNA + S-adenosyl-L-methionine = a 5'-end (N(7)-methyl 5'-triphosphoguanosine)-(2'-O-methyl-ribonucleoside) in mRNA + S-adenosyl-L-homocysteine + H(+). Its function is as follows. Displays methyltransferase, positive regulation of the poly(A) polymerase and transcription elongation activities. Involved in the modification of both mRNA ends and in intermediate and late gene positive transcription elongation. At the mRNAs 5' end, methylates the ribose 2' OH group of the first transcribed nucleotide, thereby producing a 2'-O-methylpurine cap. At the 3' end, functions as a processivity factor which stimulates the activity of the viral poly(A) polymerase OPG063 that creates mRNA's poly(A) tail. In the presence of OPG102, OPG063 does not dissociate from the RNA allowing tail elongation to around 250 adenylates. The chain is Cap-specific mRNA (nucleoside-2'-O-)-methyltransferase (OPG102) from Sus scrofa (Pig).